Consider the following 27-residue polypeptide: Antimicrobial peptide 1 (27 aa).

Expressed by the skin glands.

The protein resides in the secreted. Functionally, has very weak antimicrobial activity against Gram-positive bacterium S.aureus and Gram-negative bacterium E.coli and stronger activity against yeast C.albicans. Enhances the antibacterial activity of XT3. Has hemolytic activity against human red blood cells. The protein is Antimicrobial peptide 1 of Xenopus tropicalis (Western clawed frog).